The following is a 78-amino-acid chain: Translation initiation factor IF-1 (78 aa).

The region spanning 2–78 (SKNNLNETES…TQARITYRFK (77 aa)) is the S1-like domain.

It belongs to the IF-1 family. As to quaternary structure, component of the 30S ribosomal translation pre-initiation complex which assembles on the 30S ribosome in the order IF-2 and IF-3, IF-1 and N-formylmethionyl-tRNA(fMet); mRNA recruitment can occur at any time during PIC assembly.

It localises to the cytoplasm. Functionally, one of the essential components for the initiation of protein synthesis. Stabilizes the binding of IF-2 and IF-3 on the 30S subunit to which N-formylmethionyl-tRNA(fMet) subsequently binds. Helps modulate mRNA selection, yielding the 30S pre-initiation complex (PIC). Upon addition of the 50S ribosomal subunit IF-1, IF-2 and IF-3 are released leaving the mature 70S translation initiation complex. The polypeptide is Translation initiation factor IF-1 (Aster yellows witches'-broom phytoplasma (strain AYWB)).